The following is a 572-amino-acid chain: uncharacterized protein (572 aa).

The segment at 553–572 is disordered; it reads PSPAPKPVTVRKKKGNSPIS. The span at 561 to 572 shows a compositional bias: basic residues; sequence TVRKKKGNSPIS.

This is an uncharacterized protein from Homo sapiens (Human).